The chain runs to 135 residues: UPF0299 membrane protein ECA2828 (135 aa).

4 consecutive transmembrane segments (helical) span residues 5–25, 30–50, 63–83, and 93–113; these read FIVC…LLAG, ALLP…FTLL, GCYL…VGVM, and FGPI…VVGF.

This sequence belongs to the UPF0299 family.

It is found in the cell inner membrane. This Pectobacterium atrosepticum (strain SCRI 1043 / ATCC BAA-672) (Erwinia carotovora subsp. atroseptica) protein is UPF0299 membrane protein ECA2828.